The chain runs to 186 residues: Negative modulator of initiation of replication (186 aa).

It belongs to the SeqA family. In terms of assembly, homodimer. Polymerizes to form helical filaments.

It localises to the cytoplasm. Its function is as follows. Negative regulator of replication initiation, which contributes to regulation of DNA replication and ensures that replication initiation occurs exactly once per chromosome per cell cycle. Binds to pairs of hemimethylated GATC sequences in the oriC region, thus preventing assembly of replication proteins and re-initiation at newly replicated origins. Repression is relieved when the region becomes fully methylated. The chain is Negative modulator of initiation of replication from Glaesserella parasuis serovar 5 (strain SH0165) (Haemophilus parasuis).